The sequence spans 488 residues: Serine/threonine-protein kinase 32C (488 aa).

Residues 1-56 (MRSGAERRGSSAAAPPSSPPPGRARPAGSDVSPALPPPAASQPRARDAGDARAQPR) form a disordered region. A phosphoserine mark is found at Ser10, Ser17, and Ser18. The span at 24 to 33 (ARPAGSDVSP) shows a compositional bias: low complexity. One can recognise a Protein kinase domain in the interval 94 to 354 (FQILRAIGKG…LQDMQTAPSL (261 aa)). ATP is bound by residues 100 to 108 (IGKGSFGKV) and Lys123. The active-site Proton acceptor is the Asp217. Basic residues predominate over residues 397-406 (HKKKKRLAKN). 2 disordered regions span residues 397–420 (HKKK…QSEN) and 443–488 (KRSQ…SGSS).

Belongs to the protein kinase superfamily. Ser/Thr protein kinase family. It depends on Mg(2+) as a cofactor.

The enzyme catalyses L-seryl-[protein] + ATP = O-phospho-L-seryl-[protein] + ADP + H(+). The catalysed reaction is L-threonyl-[protein] + ATP = O-phospho-L-threonyl-[protein] + ADP + H(+). In Mus musculus (Mouse), this protein is Serine/threonine-protein kinase 32C.